The chain runs to 375 residues: MDVEKKIELIKKKPTEELLTEENLRHLFEVGIPMQHYIGFEISGYIHLGTGLMAGAKIADLQKAGIKTRIFLADWHSWINDKLGGDLETIQKVALTYFKEGMKQSIKVMGGDPDKVEFVLASEILEKGDYWQTVIDISKNVTLARMMRSITIMGRQMGESIDFAKLIYPAMQVADIFYQGVTIAHAGMDQRKAHVIAIEVAQKLKYHPLEWKGEKLKPVALHHHLLLGLQEPPVWPIESEEQFKELKTQMKMSKSKPYSAVFIHDSPEEIRQKLRKAFCPAREVRYNPVLDWAEYIIFREEPTEFTIHRPAKFGGDVTYTTSEELKRDFAEGKLHPLDLKNAVAEYLIELLKPVREYFEKHPEPLELMREVKITR.

Residues Tyr-37, Tyr-168, Gln-172, Asp-175, and Gln-190 each contribute to the L-tyrosine site. The short motif at 251–255 is the 'KMSKS' region element; the sequence is KMSKS. Residue Lys-254 participates in ATP binding.

It belongs to the class-I aminoacyl-tRNA synthetase family. TyrS type 4 subfamily. In terms of assembly, homodimer.

It localises to the cytoplasm. The catalysed reaction is tRNA(Tyr) + L-tyrosine + ATP = L-tyrosyl-tRNA(Tyr) + AMP + diphosphate + H(+). Catalyzes the attachment of tyrosine to tRNA(Tyr) in a two-step reaction: tyrosine is first activated by ATP to form Tyr-AMP and then transferred to the acceptor end of tRNA(Tyr). In Thermococcus gammatolerans (strain DSM 15229 / JCM 11827 / EJ3), this protein is Tyrosine--tRNA ligase.